The sequence spans 174 residues: Adenine phosphoribosyltransferase (174 aa).

It belongs to the purine/pyrimidine phosphoribosyltransferase family. As to quaternary structure, homodimer.

It localises to the cytoplasm. The enzyme catalyses AMP + diphosphate = 5-phospho-alpha-D-ribose 1-diphosphate + adenine. It functions in the pathway purine metabolism; AMP biosynthesis via salvage pathway; AMP from adenine: step 1/1. Functionally, catalyzes a salvage reaction resulting in the formation of AMP, that is energically less costly than de novo synthesis. This Dichelobacter nodosus (strain VCS1703A) protein is Adenine phosphoribosyltransferase.